A 692-amino-acid chain; its full sequence is DNA-binding protein RFX2 (692 aa).

The disordered stretch occupies residues 1–26 (MQNSEGGADSPATVALRPAAQPVPAS). The residue at position 26 (S26) is a Phosphoserine. A DNA-binding region (RFX-type winged-helix) is located at residues 169-244 (TLQWLLDNYE…YHYYGIRLKP (76 aa)). The tract at residues 261 to 296 (RQQPTHQKPRYRPAQKSDSLGDGSAHSNMHSTPEQA) is disordered. The segment covering 285–294 (AHSNMHSTPE) has biased composition (polar residues). At S386 the chain carries Phosphoserine. Residues 660–685 (DGHSSEADVDGRSLGEPLVKRERSDP) show a composition bias toward basic and acidic residues. The segment at 660–692 (DGHSSEADVDGRSLGEPLVKRERSDPSHPLQGI) is disordered.

Belongs to the RFX family. As to quaternary structure, homodimer; probably only forms homodimers in testis. Heterodimer; heterodimerizes with RFX1 and RFX3. In terms of tissue distribution, expressed at highest level in testis. Expressed at lower level in thymus. Also expressed in stomach, kidney, liver, brain and heart. Weakly expressed in spleen and lung. Within testis, most abundantly present in spermatocytes: present from pachytene spermatocytes to early spermatids (at protein level). Also present in non-germinal tissues.

Its subcellular location is the nucleus. It is found in the cytoplasm. Its function is as follows. Transcription factor that acts as a key regulator of spermatogenesis. Acts by regulating expression of genes required for the haploid phase during spermiogenesis, such as genes required for cilium assembly and function. Recognizes and binds the X-box, a regulatory motif with DNA sequence 5'-GTNRCC(0-3N)RGYAAC-3' present on promoters. Probably activates transcription of the testis-specific histone gene H1-6. In Rattus norvegicus (Rat), this protein is DNA-binding protein RFX2 (Rfx2).